Consider the following 228-residue polypeptide: NOI-like protein (228 aa).

Over residues 56–75 the composition is skewed to basic and acidic residues; the sequence is AQDHQHSEKHHNDTSTDYHV. Disordered regions lie at residues 56-87 and 99-133; these read AQDH…HRRE and RPHR…RNSD. The span at 76 to 86 shows a compositional bias: basic residues; sequence VKQHRRKHHRR. The span at 118–133 shows a compositional bias: polar residues; that stretch reads HGTSATMSSSVKRNSD.

It belongs to the RIN4 family.

This chain is NOI-like protein, found in Elaeis oleifera (American oil palm).